A 371-amino-acid chain; its full sequence is N-acetyldiaminopimelate deacetylase (371 aa).

The active site involves Asp68. Catalysis depends on Glu127, which acts as the Proton acceptor.

It belongs to the peptidase M20A family. N-acetyldiaminopimelate deacetylase subfamily.

The catalysed reaction is N-acetyl-(2S,6S)-2,6-diaminopimelate + H2O = (2S,6S)-2,6-diaminopimelate + acetate. It functions in the pathway amino-acid biosynthesis; L-lysine biosynthesis via DAP pathway; LL-2,6-diaminopimelate from (S)-tetrahydrodipicolinate (acetylase route): step 3/3. Functionally, catalyzes the conversion of N-acetyl-diaminopimelate to diaminopimelate and acetate. The chain is N-acetyldiaminopimelate deacetylase from Listeria monocytogenes serotype 4b (strain CLIP80459).